Consider the following 440-residue polypeptide: Chromosomal replication initiator protein DnaA (440 aa).

A domain I, interacts with DnaA modulators region spans residues 1 to 69 (MKERILQEIK…VKVVLGNDAT (69 aa)). The tract at residues 69–96 (TFEITYEAFEPHSSYSEPLVKKRAVLLT) is domain II. Positions 97–313 (PLNPDYTFEN…GAIIKLLVYK (217 aa)) are domain III, AAA+ region. The ATP site is built by Gly140, Gly142, Lys143, and Thr144. The interval 314-440 (ETTGKEVDLR…GEISKRALSG (127 aa)) is domain IV, binds dsDNA.

It belongs to the DnaA family. Oligomerizes as a right-handed, spiral filament on DNA at oriC.

The protein localises to the cytoplasm. Functionally, plays an essential role in the initiation and regulation of chromosomal replication. ATP-DnaA binds to the origin of replication (oriC) to initiate formation of the DNA replication initiation complex once per cell cycle. Binds the DnaA box (a 9 base pair repeat at the origin) and separates the double-stranded (ds)DNA. Forms a right-handed helical filament on oriC DNA; dsDNA binds to the exterior of the filament while single-stranded (ss)DNA is stabiized in the filament's interior. The ATP-DnaA-oriC complex binds and stabilizes one strand of the AT-rich DNA unwinding element (DUE), permitting loading of DNA polymerase. After initiation quickly degrades to an ADP-DnaA complex that is not apt for DNA replication. Binds acidic phospholipids. The sequence is that of Chromosomal replication initiator protein DnaA from Thermotoga petrophila (strain ATCC BAA-488 / DSM 13995 / JCM 10881 / RKU-1).